A 349-amino-acid chain; its full sequence is Divinyl chlorophyll a/b light-harvesting protein PcbA (349 aa).

6 helical membrane-spanning segments follow: residues 27–47, 57–77, 89–109, 202–222, 242–262, and 304–324; these read FIAA…AFTL, VPMG…GIGF, VVAV…GGLM, VMGG…FHIA, AILS…AFWS, and LANV…WHAL.

The protein belongs to the PsbB/PsbC family. IsiA/Pcb subfamily. As to quaternary structure, the antenna complex consists of divinyl chlorophylls (a and b) and divinyl chlorophyll a/b binding proteins and binds more divinyl chlorophyll b than does the antenna complex from high-light-adapted Prochlorococcus. Requires divinyl chlorophyll a as cofactor. Divinyl chlorophyll b is required as a cofactor.

It is found in the cellular thylakoid membrane. Functionally, the antenna complex functions as a light receptor, it captures and delivers excitation energy to photosystems II and I. The Prochlorales pcb genes are not related to higher plant LHCs. The polypeptide is Divinyl chlorophyll a/b light-harvesting protein PcbA (pcbA) (Prochlorococcus marinus (strain NATL2A)).